The sequence spans 480 residues: Sporozoite surface protein P36p (480 aa).

An N-terminal signal peptide occupies residues 1–22; sequence MKRRSIFMYYCFCFLLKYVAFS. 2 consecutive 6-Cys domains span residues 23-156 and 159-298; these read NVPN…FKKM and KIKG…TSKN. N-linked (GlcNAc...) asparagine glycans are attached at residues N28, N40, N92, N111, and N184. 6 cysteine pairs are disulfide-bonded: C37–C49, C63–C137, C80–C135, C163–C187, C201–C280, and C221–C278. Residues N294, N368, N375, N392, N405, N409, and N424 are each glycosylated (N-linked (GlcNAc...) asparagine). The disordered stretch occupies residues 358–415; it reads KMDSSDDDESNETESSENESNERTHNGNRANKDANNSEKMTGNRRKKNNSINNTNYYS. Over residues 362–376 the composition is skewed to acidic residues; sequence SDDDESNETESSENE. Residues 377–393 show a composition bias toward basic and acidic residues; sequence SNERTHNGNRANKDANN. Positions 406–415 are enriched in low complexity; the sequence is NSINNTNYYS. A lipid anchor (GPI-anchor amidated serine) is attached at S457. A propeptide spans 458-480 (removed in mature form); it reads SSYYEVFNYFSIAFILIIHMLLL.

It localises to the cell surface. The protein resides in the cell membrane. Its function is as follows. Involved in sporozoite infection of hepatocytes and replication therein. This is Sporozoite surface protein P36p (P52) from Plasmodium yoelii yoelii.